Here is a 345-residue protein sequence, read N- to C-terminus: GDP-mannose transporter (345 aa).

The Cytoplasmic segment spans residues 1 to 8 (MDNHMLNR). The chain crosses the membrane as a helical span at residues 9–29 (ISKSPILPVVSYCMASILMTL). Over 30-40 (TNKYVLSSPGY) the chain is Lumenal. The chain crosses the membrane as a helical span at residues 41 to 61 (NMNFLLLTVQSTVCVAAIGIL). Residues 62 to 78 (KRLKVINYRDFDFREAK) lie on the Cytoplasmic side of the membrane. Residues 79 to 101 (FWFPISFLLVAMIYTASKALQFL) traverse the membrane as a helical segment. Topologically, residues 102–104 (SVP) are lumenal. The chain crosses the membrane as a helical span at residues 105 to 127 (VYTIFKNLTIIIIAYGEVLWFGG). Over 128-131 (HVTA) the chain is Cytoplasmic. A helical transmembrane segment spans residues 132–150 (LTLFSFGLMVLSSIVAAWA). The Lumenal segment spans residues 151-161 (DIQSSSFASQT). A helical transmembrane segment spans residues 162–182 (LNSGYLWMVLNCLTNAAFVLA). Over 183-194 (MRKRIKLTNFRD) the chain is Cytoplasmic. A helical membrane pass occupies residues 195 to 215 (FDTMFYNNLLSIPVLVICTLF). Over 216 to 233 (TEDWSAENIAQNFPPDAK) the chain is Lumenal. The chain crosses the membrane as a helical span at residues 234 to 254 (FGVLMAMAISGVSSVGISYTS). At 255-264 (AWCVRVTSST) the chain is on the cytoplasmic side. The chain crosses the membrane as a helical span at residues 265–285 (TYSMVGALNKLPLAIAGLVFF). Residues 286–288 (DAP) are Lumenal-facing. The chain crosses the membrane as a helical span at residues 289–309 (ITFGSVTAILLGFISGVVYAV). The Cytoplasmic segment spans residues 310 to 345 (AKSQQQRQKDPATILPMTHNPVSASSQSMRDSLSKS). The tract at residues 319-345 (DPATILPMTHNPVSASSQSMRDSLSKS) is disordered. Polar residues predominate over residues 329–345 (NPVSASSQSMRDSLSKS).

Belongs to the TPT transporter family. SLC35D subfamily. As to quaternary structure, homooligomer.

The protein localises to the golgi apparatus membrane. It is found in the cytoplasmic vesicle membrane. The protein resides in the endoplasmic reticulum membrane. Its function is as follows. Involved in the import of GDP-mannose from the cytoplasm into the Golgi lumen. This chain is GDP-mannose transporter (vrg4), found in Schizosaccharomyces pombe (strain 972 / ATCC 24843) (Fission yeast).